Reading from the N-terminus, the 195-residue chain is Large ribosomal subunit protein bL27c (195 aa).

The N-terminal 60 residues, 1–60, are a transit peptide targeting the chloroplast; sequence MASMAFTLVGAFKGMSLSSPCHSSSSASFLRADRVSLSVGGGVGMGVPMTMPVRRLTIQM.

It belongs to the bacterial ribosomal protein bL27 family. In terms of assembly, part of the 50S ribosomal subunit.

It is found in the plastid. The protein localises to the chloroplast. This Oryza sativa subsp. japonica (Rice) protein is Large ribosomal subunit protein bL27c (RPL27).